The following is a 442-amino-acid chain: Probable 6-phospho-beta-glucosidase (442 aa).

An NAD(+)-binding site is contributed by 5–73 (LKIVTIGGGS…VPIDIHLTLD (69 aa)). The substrate site is built by Arg96 and Asn150. Residues Cys172 and His202 each contribute to the Mn(2+) site. The active-site Proton acceptor is Tyr256.

It belongs to the glycosyl hydrolase 4 family. NAD(+) serves as cofactor. A divalent metal cation is required as a cofactor.

The catalysed reaction is 6-phospho-beta-D-glucosyl-(1-&gt;4)-D-glucose + H2O = D-glucose 6-phosphate + D-glucose. Its function is as follows. Hydrolyzes phospho-beta-glucosides. This Bacillus subtilis (strain 168) protein is Probable 6-phospho-beta-glucosidase (licH).